A 172-amino-acid chain; its full sequence is Small ribosomal subunit protein uS5 (172 aa).

Residues 17–80 (LREKMISVNR…EQARRNMFKV (64 aa)) form the S5 DRBM domain.

This sequence belongs to the universal ribosomal protein uS5 family. As to quaternary structure, part of the 30S ribosomal subunit. Contacts proteins S4 and S8.

Functionally, with S4 and S12 plays an important role in translational accuracy. Located at the back of the 30S subunit body where it stabilizes the conformation of the head with respect to the body. This is Small ribosomal subunit protein uS5 from Burkholderia thailandensis (strain ATCC 700388 / DSM 13276 / CCUG 48851 / CIP 106301 / E264).